We begin with the raw amino-acid sequence, 498 residues long: Lysine--tRNA ligase (498 aa).

2 residues coordinate Mg(2+): E407 and E414.

It belongs to the class-II aminoacyl-tRNA synthetase family. As to quaternary structure, homodimer. It depends on Mg(2+) as a cofactor.

Its subcellular location is the cytoplasm. The catalysed reaction is tRNA(Lys) + L-lysine + ATP = L-lysyl-tRNA(Lys) + AMP + diphosphate. This Rhizobium etli (strain CIAT 652) protein is Lysine--tRNA ligase.